The chain runs to 460 residues: Argininosuccinate lyase (460 aa).

The protein belongs to the lyase 1 family. Argininosuccinate lyase subfamily.

The protein resides in the cytoplasm. It catalyses the reaction 2-(N(omega)-L-arginino)succinate = fumarate + L-arginine. Its pathway is amino-acid biosynthesis; L-arginine biosynthesis; L-arginine from L-ornithine and carbamoyl phosphate: step 3/3. The chain is Argininosuccinate lyase from Leuconostoc mesenteroides subsp. mesenteroides (strain ATCC 8293 / DSM 20343 / BCRC 11652 / CCM 1803 / JCM 6124 / NCDO 523 / NBRC 100496 / NCIMB 8023 / NCTC 12954 / NRRL B-1118 / 37Y).